The primary structure comprises 202 residues: Syndecan-2 (202 aa).

Residues 1–18 (MQRAWILLTLGLMACVSA) form the signal peptide. Topologically, residues 19-145 (ETRTELTSDK…HSDNLFKRTE (127 aa)) are extracellular. O-linked (Xyl...) (glycosaminoglycan) serine glycans are attached at residues Ser-41, Ser-55, and Ser-57. 2 disordered regions span residues 41–63 (SGVYPIDDDDYSSASGSGADEDI) and 88–118 (ETMTLKTQSITPAQTESPEETDKEEVDISEA). Residues 91–103 (TLKTQSITPAQTE) show a composition bias toward polar residues. Residues 104 to 117 (SPEETDKEEVDISE) are compositionally biased toward acidic residues. Ser-116 carries the post-translational modification Phosphoserine. The helical transmembrane segment at 146–170 (VLAAVIAGGVIGFLFAIFLILLLVY) threads the bilayer. The Cytoplasmic portion of the chain corresponds to 171–202 (RMRKKDEGSYDLGERKPSSAAYQKAPTKEFYA). The disordered stretch occupies residues 179 to 202 (SYDLGERKPSSAAYQKAPTKEFYA). Position 188 is a phosphoserine (Ser-188).

The protein belongs to the syndecan proteoglycan family. Interacts (via cytoplasmic domain) with SARM1. Forms a complex with SDCBP and PDCD6IP. In terms of processing, O-glycosylated; contains both heparan sulfate and chondroitin sulfate. Phosphorylated on serine residues. As to expression, preferential expression in cells of mesenchymal origin.

It localises to the membrane. In terms of biological role, cell surface proteoglycan which regulates dendritic arbor morphogenesis. This Mus musculus (Mouse) protein is Syndecan-2 (Sdc2).